The primary structure comprises 348 residues: Heat-inducible transcription repressor HrcA (348 aa).

This sequence belongs to the HrcA family.

Negative regulator of class I heat shock genes (grpE-dnaK-dnaJ and groELS operons). Prevents heat-shock induction of these operons. The protein is Heat-inducible transcription repressor HrcA of Pelotomaculum thermopropionicum (strain DSM 13744 / JCM 10971 / SI).